Here is a 1394-residue protein sequence, read N- to C-terminus: Kinesin-like protein KIF27 (1394 aa).

The Kinesin motor domain occupies 5–341 (PIKVAVRIRP…LKYANRARNI (337 aa)). 84–91 (GQTGSGKT) lines the ATP pocket. Coiled-coil stretches lie at residues 352–418 (QADR…IEQA) and 493–554 (QVVF…ELAK). Disordered stretches follow at residues 551–583 (ELAKRSSSMPTSTKESCGDGPDARAPEKRPHTA) and 642–664 (FSDNSDDEDSEGQEKPRVRSRSH). A compositionally biased stretch (polar residues) spans 555-565 (RSSSMPTSTKE). A compositionally biased stretch (basic and acidic residues) spans 571-580 (PDARAPEKRP). Phosphoserine occurs at positions 643, 646, 672, 675, and 704. The stretch at 709–980 (LQKLRTSELI…NKKLRSSQAL (272 aa)) forms a coiled coil. S999 is modified (phosphoserine). Coiled coils occupy residues 1010–1078 (TEEK…SIQN), 1118–1152 (NKVINLREAERKQQLQNKEMKMKVLERDNMVHELE), and 1187–1226 (QDGEGIIETLNKYEDKIQQLEKDLYFYKKTSRDLKKRLKD). Residues 1267-1280 (TENTKLNGREKEVD) are compositionally biased toward basic and acidic residues. The segment at 1267–1340 (TENTKLNGRE…SQSPPPPQLQ (74 aa)) is disordered. Composition is skewed to polar residues over residues 1281–1295 (NSSSSLKTPPLTQQI) and 1310–1320 (APSSGQLQSSA). S1365 and S1387 each carry phosphoserine. Positions 1375-1394 (SLGAGVRSVTADSLEEPEES) are disordered.

The protein belongs to the TRAFAC class myosin-kinesin ATPase superfamily. Kinesin family. KIF27 subfamily. As to quaternary structure, interacts with STK36.

It localises to the cytoplasm. The protein localises to the cytoskeleton. It is found in the cell projection. Its subcellular location is the cilium. In terms of biological role, plays an essential role in motile ciliogenesis. The protein is Kinesin-like protein KIF27 (Kif27) of Rattus norvegicus (Rat).